We begin with the raw amino-acid sequence, 173 residues long: Photosystem I assembly protein Ycf3 (173 aa).

TPR repeat units follow at residues Ala35–Ser68, Ser72–Gln105, and Gly120–Gly153.

It belongs to the Ycf3 family.

The protein resides in the cellular thylakoid membrane. Essential for the assembly of the photosystem I (PSI) complex. May act as a chaperone-like factor to guide the assembly of the PSI subunits. The chain is Photosystem I assembly protein Ycf3 from Synechococcus sp. (strain CC9605).